We begin with the raw amino-acid sequence, 427 residues long: MKTFLFTFCLVAIFGSSSWIGTNSVWMELSLLTAKLPEGWNLPSYLSAIVQIACLGPLIYSIIHKGIKMTIPTVPLIFIFMVLACICQLGLCFFWDDTGYIFGAIRSWPLYLLLFGLAIVDAISSVLFLPFMAQFHPSFLNAYFVGMGLSALIPSLLSLIQGTSNYWCDDNKTPHYYPPRFSVSMFFLINFFFTCAAVAAFLVLYKIGAHKNSSQVEPEPKHSIQIIQGDSTTDVNEVNTESSFQETSSIPDSSSATGARLAFLLLTTALVNAQMNGIVTSVQSYATLVYSQNTYHYAVTLSNVISPLASYLQFFVKIRSLPILAFLTLCSSLTTAVIIYLAALSPNWIFNSETAGTIISIASSLIAAGLHSYLRVMFAALLREGNQKESRLFWCGAFIQIGSFTGSAIMFPLVNVWKLFHSAPSCR.

At Met1 to Lys2 the chain is on the cytoplasmic side. A helical membrane pass occupies residues Thr3–Asn23. The Extracellular segment spans residues Ser24–Leu42. Residues Pro43–Ile63 traverse the membrane as a helical segment. Residues His64 to Thr73 are Cytoplasmic-facing. Residues Val74–Phe94 form a helical membrane-spanning segment. Residues Trp95 to Tyr111 lie on the Extracellular side of the membrane. The chain crosses the membrane as a helical span at residues Leu112 to Met132. At Ala133–Phe139 the chain is on the cytoplasmic side. Residues Leu140–Ile160 traverse the membrane as a helical segment. Residues Gln161–Ser184 lie on the Extracellular side of the membrane. The helical transmembrane segment at Met185–Tyr205 threads the bilayer. The Cytoplasmic segment spans residues Lys206–Leu261. Residues Ala262–Val282 form a helical membrane-spanning segment. The Extracellular portion of the chain corresponds to Gln283–Tyr297. The helical transmembrane segment at Ala298–Ile318 threads the bilayer. Residues Arg319–Pro322 are Cytoplasmic-facing. A helical transmembrane segment spans residues Ile323 to Ala343. Over Leu344 to Glu353 the chain is Extracellular. A helical membrane pass occupies residues Thr354–Leu374. The Cytoplasmic portion of the chain corresponds to Arg375–Arg391. Residues Leu392–Pro412 form a helical membrane-spanning segment. Residues Leu413 to Arg427 are Extracellular-facing.

It belongs to the riboflavin transporter family. In terms of tissue distribution, expressed in intestine.

The protein localises to the cell membrane. The catalysed reaction is riboflavin(in) = riboflavin(out). Its activity is regulated as follows. Activity is strongly inhibited by riboflavin analogs, such as lumiflavin and lumichrome. Riboflavin transporter. Riboflavin transport is Na(+)-independent but pH-sensitive. The sequence is that of Riboflavin transporter rft-1 from Caenorhabditis elegans.